A 121-amino-acid polypeptide reads, in one-letter code: Putative SNURF-like protein (121 aa).

This sequence belongs to the SNURF family.

The sequence is that of Putative SNURF-like protein (SNURFL) from Homo sapiens (Human).